The following is a 235-amino-acid chain: Large ribosomal subunit protein uL1 (235 aa).

This sequence belongs to the universal ribosomal protein uL1 family. As to quaternary structure, part of the 50S ribosomal subunit.

Its function is as follows. Binds directly to 23S rRNA. The L1 stalk is quite mobile in the ribosome, and is involved in E site tRNA release. Protein L1 is also a translational repressor protein, it controls the translation of the L11 operon by binding to its mRNA. The protein is Large ribosomal subunit protein uL1 of Blochmanniella floridana.